The following is an 89-amino-acid chain: Small ribosomal subunit protein uS15 (89 aa).

This sequence belongs to the universal ribosomal protein uS15 family. Part of the 30S ribosomal subunit. Forms a bridge to the 50S subunit in the 70S ribosome, contacting the 23S rRNA.

Its function is as follows. One of the primary rRNA binding proteins, it binds directly to 16S rRNA where it helps nucleate assembly of the platform of the 30S subunit by binding and bridging several RNA helices of the 16S rRNA. In terms of biological role, forms an intersubunit bridge (bridge B4) with the 23S rRNA of the 50S subunit in the ribosome. This chain is Small ribosomal subunit protein uS15, found in Psychromonas ingrahamii (strain DSM 17664 / CCUG 51855 / 37).